A 294-amino-acid polypeptide reads, in one-letter code: 4-hydroxy-tetrahydrodipicolinate synthase (294 aa).

Threonine 44 is a pyruvate binding site. Tyrosine 132 serves as the catalytic Proton donor/acceptor. Catalysis depends on lysine 160, which acts as the Schiff-base intermediate with substrate. Valine 202 contributes to the pyruvate binding site.

This sequence belongs to the DapA family. Homotetramer; dimer of dimers.

The protein resides in the cytoplasm. The enzyme catalyses L-aspartate 4-semialdehyde + pyruvate = (2S,4S)-4-hydroxy-2,3,4,5-tetrahydrodipicolinate + H2O + H(+). It participates in amino-acid biosynthesis; L-lysine biosynthesis via DAP pathway; (S)-tetrahydrodipicolinate from L-aspartate: step 3/4. Functionally, catalyzes the condensation of (S)-aspartate-beta-semialdehyde [(S)-ASA] and pyruvate to 4-hydroxy-tetrahydrodipicolinate (HTPA). The polypeptide is 4-hydroxy-tetrahydrodipicolinate synthase (Leptospira biflexa serovar Patoc (strain Patoc 1 / Ames)).